Consider the following 842-residue polypeptide: Protein translocase subunit SecA (842 aa).

ATP contacts are provided by residues glutamine 85, 103–107, and aspartate 493; that span reads GEGKT. Positions 825, 827, 836, and 837 each coordinate Zn(2+).

The protein belongs to the SecA family. Monomer and homodimer. Part of the essential Sec protein translocation apparatus which comprises SecA, SecYEG and auxiliary proteins SecDF. Other proteins may also be involved. Zn(2+) serves as cofactor.

The protein localises to the cell membrane. The protein resides in the cytoplasm. The catalysed reaction is ATP + H2O + cellular proteinSide 1 = ADP + phosphate + cellular proteinSide 2.. Functionally, part of the Sec protein translocase complex. Interacts with the SecYEG preprotein conducting channel. Has a central role in coupling the hydrolysis of ATP to the transfer of proteins into and across the cell membrane, serving as an ATP-driven molecular motor driving the stepwise translocation of polypeptide chains across the membrane. This chain is Protein translocase subunit SecA, found in Streptococcus equi subsp. zooepidemicus (strain H70).